Here is a 351-residue protein sequence, read N- to C-terminus: V-type proton ATPase subunit d1 (351 aa).

Belongs to the V-ATPase V0D/AC39 subunit family. V-ATPase is a heteromultimeric enzyme composed of a peripheral catalytic V1 complex (components A to H) attached to an integral membrane V0 proton pore complex (components: a, c, c'', d and e).

Its subcellular location is the vacuole membrane. Functionally, subunit of the integral membrane V0 complex of vacuolar ATPase. Vacuolar ATPase is responsible for acidifying a variety of intracellular compartments in eukaryotic cells, thus providing most of the energy required for transport processes in the vacuolar system. In Arabidopsis thaliana (Mouse-ear cress), this protein is V-type proton ATPase subunit d1 (VHA-d1).